The primary structure comprises 321 residues: 26S proteasome non-ATPase regulatory subunit 7 (321 aa).

The MPN domain occupies 9-144; the sequence is VVVHPLVLLS…TEAYISVEEV (136 aa). A Glycyl lysine isopeptide (Lys-Gly) (interchain with G-Cter in ubiquitin) cross-link involves residue lysine 180. Residues lysine 204, lysine 214, lysine 313, and lysine 314 each carry the N6-acetyllysine modification. A disordered region spans residues 281-321; it reads ANRDAEKKEGQEKEESKKERKDDKEKEKSDAAKKEEKKEKK.

Belongs to the peptidase M67A family. As to quaternary structure, component of the 19S proteasome regulatory particle complex. The 26S proteasome consists of a 20S core particle (CP) and two 19S regulatory subunits (RP). The regulatory particle is made of a lid composed of 9 subunits including PSMD7, a base containing 6 ATPases and few additional components. Within the complex, PSMD7 interacts with subunit PSMD4 through their respective MPN domain. Interacts with TRIM5.

Its function is as follows. Component of the 26S proteasome, a multiprotein complex involved in the ATP-dependent degradation of ubiquitinated proteins. This complex plays a key role in the maintenance of protein homeostasis by removing misfolded or damaged proteins, which could impair cellular functions, and by removing proteins whose functions are no longer required. Therefore, the proteasome participates in numerous cellular processes, including cell cycle progression, apoptosis, or DNA damage repair. The chain is 26S proteasome non-ATPase regulatory subunit 7 (Psmd7) from Mus musculus (Mouse).